Reading from the N-terminus, the 300-residue chain is Soluble inorganic pyrophosphatase 6, chloroplastic (300 aa).

The N-terminal 66 residues, 1–66, are a transit peptide targeting the chloroplast; sequence MAATRVLTAA…CSAIYNPQVK (66 aa). Arginine 140 is a binding site for diphosphate. Tyrosine 142 acts as the Proton donor in catalysis. Residues aspartate 173, aspartate 178, and aspartate 210 each contribute to the Mg(2+) site.

The protein belongs to the PPase family. It depends on Mg(2+) as a cofactor. As to expression, expressed in all tissues tested. Highest expression in flowers, leaves and roots. Lower levels of expression in siliques, stems, ovary, stigma and pollen.

It localises to the plastid. The protein resides in the chloroplast stroma. It carries out the reaction diphosphate + H2O = 2 phosphate + H(+). Its activity is regulated as follows. Inhibited by NaF. The polypeptide is Soluble inorganic pyrophosphatase 6, chloroplastic (Arabidopsis thaliana (Mouse-ear cress)).